A 433-amino-acid polypeptide reads, in one-letter code: Pyrimidine-nucleoside phosphorylase (433 aa).

Residue 81–83 (KHS) coordinates phosphate. The K(+) site is built by Gly-88 and Thr-90. Residues Thr-92, 108–110 (KMS), and Thr-120 contribute to the phosphate site. The substrate site is built by Arg-168 and Lys-187. Positions 243, 246, and 255 each coordinate K(+).

This sequence belongs to the thymidine/pyrimidine-nucleoside phosphorylase family. As to quaternary structure, homodimer. It depends on K(+) as a cofactor.

The enzyme catalyses uridine + phosphate = alpha-D-ribose 1-phosphate + uracil. It carries out the reaction thymidine + phosphate = 2-deoxy-alpha-D-ribose 1-phosphate + thymine. The catalysed reaction is 2'-deoxyuridine + phosphate = 2-deoxy-alpha-D-ribose 1-phosphate + uracil. Functionally, catalyzes phosphorolysis of the pyrimidine nucleosides uridine, thymidine and 2'-deoxyuridine with the formation of the corresponding pyrimidine base and ribose-1-phosphate. This Staphylococcus aureus (strain MSSA476) protein is Pyrimidine-nucleoside phosphorylase (pdp).